The primary structure comprises 410 residues: Gamma-glutamyl phosphate reductase (410 aa).

This sequence belongs to the gamma-glutamyl phosphate reductase family.

It is found in the cytoplasm. It catalyses the reaction L-glutamate 5-semialdehyde + phosphate + NADP(+) = L-glutamyl 5-phosphate + NADPH + H(+). The protein operates within amino-acid biosynthesis; L-proline biosynthesis; L-glutamate 5-semialdehyde from L-glutamate: step 2/2. Catalyzes the NADPH-dependent reduction of L-glutamate 5-phosphate into L-glutamate 5-semialdehyde and phosphate. The product spontaneously undergoes cyclization to form 1-pyrroline-5-carboxylate. This is Gamma-glutamyl phosphate reductase from Campylobacter jejuni subsp. jejuni serotype O:2 (strain ATCC 700819 / NCTC 11168).